Here is a 65-residue protein sequence, read N- to C-terminus: Ferredoxin-like protein in vnf region (65 aa).

2 4Fe-4S ferredoxin-type domains span residues 2–30 and 32–65; these read AMAIDGYECTVCGDCEPVCPTGSIVFRDD and YAIEADSCNECTDVGEPRCLGVCPVDLCIQPLDD. Positions 10, 13, 16, 20, 39, 42, 50, and 54 each coordinate [4Fe-4S] cluster.

[4Fe-4S] cluster is required as a cofactor.

The polypeptide is Ferredoxin-like protein in vnf region (Azotobacter vinelandii).